A 308-amino-acid polypeptide reads, in one-letter code: Ycf92-like protein (308 aa).

5 consecutive transmembrane segments (helical) span residues 41-61 (FANNLWRILLVALLILFTLIA), 75-95 (LLTLSFFVLAIAAISPDGLGV), 153-173 (ISTIIFTVIYSTNLYLLTTAP), 192-212 (IPVTEITLTLTLSLRFIPLVL), and 288-308 (WLAIASLTIFWGIRVVFGNQI).

The protein belongs to the ycf92 family.

It localises to the membrane. This is Ycf92-like protein from Nostoc sp. (strain PCC 7120 / SAG 25.82 / UTEX 2576).